Consider the following 206-residue polypeptide: FMN-dependent NADH:quinone oxidoreductase 4 (206 aa).

Residues serine 10 and 136–139 contribute to the FMN site; that span reads SSGG.

Belongs to the azoreductase type 1 family. In terms of assembly, homodimer. The cofactor is FMN.

The enzyme catalyses 2 a quinone + NADH + H(+) = 2 a 1,4-benzosemiquinone + NAD(+). It catalyses the reaction N,N-dimethyl-1,4-phenylenediamine + anthranilate + 2 NAD(+) = 2-(4-dimethylaminophenyl)diazenylbenzoate + 2 NADH + 2 H(+). Functionally, quinone reductase that provides resistance to thiol-specific stress caused by electrophilic quinones. Also exhibits azoreductase activity. Catalyzes the reductive cleavage of the azo bond in aromatic azo compounds to the corresponding amines. This chain is FMN-dependent NADH:quinone oxidoreductase 4, found in Pseudomonas fluorescens (strain ATCC BAA-477 / NRRL B-23932 / Pf-5).